A 101-amino-acid chain; its full sequence is Protein RnfH (101 aa).

This sequence belongs to the UPF0125 (RnfH) family.

The sequence is that of Protein RnfH from Pseudomonas aeruginosa (strain UCBPP-PA14).